The primary structure comprises 352 residues: Phenylalanine--tRNA ligase alpha subunit (352 aa).

Glutamate 258 contributes to the Mg(2+) binding site.

It belongs to the class-II aminoacyl-tRNA synthetase family. Phe-tRNA synthetase alpha subunit type 1 subfamily. Tetramer of two alpha and two beta subunits. The cofactor is Mg(2+).

It is found in the cytoplasm. The enzyme catalyses tRNA(Phe) + L-phenylalanine + ATP = L-phenylalanyl-tRNA(Phe) + AMP + diphosphate + H(+). This is Phenylalanine--tRNA ligase alpha subunit from Staphylococcus epidermidis (strain ATCC 35984 / DSM 28319 / BCRC 17069 / CCUG 31568 / BM 3577 / RP62A).